The primary structure comprises 475 residues: Glutamate--tRNA ligase (475 aa).

The 'HIGH' region motif lies at 9–19 (PSPTGYLHVGG). A 'KMSKS' region motif is present at residues 240-244 (KLSKR). Lys243 is an ATP binding site.

This sequence belongs to the class-I aminoacyl-tRNA synthetase family. Glutamate--tRNA ligase type 1 subfamily. Monomer.

It is found in the cytoplasm. It catalyses the reaction tRNA(Glu) + L-glutamate + ATP = L-glutamyl-tRNA(Glu) + AMP + diphosphate. Functionally, catalyzes the attachment of glutamate to tRNA(Glu) in a two-step reaction: glutamate is first activated by ATP to form Glu-AMP and then transferred to the acceptor end of tRNA(Glu). The protein is Glutamate--tRNA ligase of Vibrio campbellii (strain ATCC BAA-1116).